A 583-amino-acid polypeptide reads, in one-letter code: Torsin-1A-interacting protein 1 (583 aa).

The segment covering 1–12 (MAGDGRRAEAVR) has biased composition (basic and acidic residues). 2 disordered regions span residues 1–254 (MAGD…RSSS) and 271–293 (AHDK…WAPQ). Topologically, residues 1–338 (MAGDGRRAEA…NASFVKRNRW (338 aa)) are nuclear. Phosphoserine is present on serine 60. Composition is skewed to basic and acidic residues over residues 74–101 (VAKE…EVRE) and 115–124 (RPQETEEMKT). Residues serine 135 and serine 143 each carry the phosphoserine modification. Methionine 146 carries the post-translational modification Methionine sulfoxide. Serine 154, serine 156, and serine 157 each carry phosphoserine. Over residues 165–174 (QTDLSQTISK) the composition is skewed to polar residues. 2 positions are modified to phosphoserine: serine 186 and serine 215. Residues 216-225 (EEGETEEDDQ) show a composition bias toward acidic residues. Threonine 220 carries the phosphothreonine modification. Residues serine 227, serine 230, and serine 242 each carry the phosphoserine modification. A compositionally biased stretch (basic and acidic residues) spans 238–250 (RSRDSDESGDKTT). Over residues 277–287 (SVLSSGYQKTP) the composition is skewed to polar residues. Methionine 301 carries the post-translational modification Methionine sulfoxide. The residue at position 305 (serine 305) is a Phosphoserine. A Glycyl lysine isopeptide (Lys-Gly) (interchain with G-Cter in SUMO2) cross-link involves residue lysine 308. Serine 309 and serine 315 each carry phosphoserine. The disordered stretch occupies residues 309 to 328 (SELGNQSPSTSSRQVTGQPQ). A helical membrane pass occupies residues 339 to 355 (WLLPLIAALASGSFWFF). Residues 356-583 (STPEVETTAV…ENALKRGICL (228 aa)) lie on the Perinuclear space side of the membrane. The segment at 356 to 583 (STPEVETTAV…ENALKRGICL (228 aa)) is interaction with TOR1A. The stretch at 359–435 (EVETTAVQEF…SEQIADAYSS (77 aa)) forms a coiled coil. The N-linked (GlcNAc...) asparagine glycan is linked to asparagine 399. Methionine sulfoxide is present on methionine 552.

It belongs to the TOR1AIP family. In terms of assembly, interacts with ATP1B4. Interacts with TOR1A (ATP-bound). Interacts with TOR1B, TOR2A and TOR3A. Interacts with VIM. In terms of processing, phosphorylated. Dephosphorylated at Ser-309 and Ser-315 by serine/threonine-protein phosphatase PP1. As to expression, expressed in muscle, liver and kidney. In terms of tissue distribution, major isoform present in liver, brain and heart (at protein level). Expressed at lower levels than isoform 4 in lung, kidney and spleen (at protein level). Similar levels of isoforms 1 and 4 are observed in ovary, testis and pancreas (at protein level). Expressed at higher levels than isoform 1 in lung, kidney and spleen (at protein level). Expressed at lower levels than isoform 1 in liver, brain and heart (at protein level). Similar levels of isoforms 1 and 4 are observed in ovary, testis and pancreas (at protein level).

The protein resides in the nucleus inner membrane. The protein localises to the nucleus envelope. Its subcellular location is the nucleus. Functionally, required for nuclear membrane integrity. Induces TOR1A and TOR1B ATPase activity and is required for their location on the nuclear membrane. Binds to A- and B-type lamins. Possible role in membrane attachment and assembly of the nuclear lamina. The chain is Torsin-1A-interacting protein 1 (TOR1AIP1) from Homo sapiens (Human).